A 101-amino-acid chain; its full sequence is NADH-quinone oxidoreductase subunit K (101 aa).

3 helical membrane passes run 4–24, 30–50, and 61–81; these read LGHYLTLGAILFALSVIGIFL, IVLLMCIELMLLAVNLNFVAF, and VFVFFILTVAAAESAIGLAIL.

This sequence belongs to the complex I subunit 4L family. NDH-1 is composed of 14 different subunits. Subunits NuoA, H, J, K, L, M, N constitute the membrane sector of the complex.

Its subcellular location is the cell inner membrane. It carries out the reaction a quinone + NADH + 5 H(+)(in) = a quinol + NAD(+) + 4 H(+)(out). NDH-1 shuttles electrons from NADH, via FMN and iron-sulfur (Fe-S) centers, to quinones in the respiratory chain. The immediate electron acceptor for the enzyme in this species is believed to be ubiquinone. Couples the redox reaction to proton translocation (for every two electrons transferred, four hydrogen ions are translocated across the cytoplasmic membrane), and thus conserves the redox energy in a proton gradient. The protein is NADH-quinone oxidoreductase subunit K of Leptothrix cholodnii (strain ATCC 51168 / LMG 8142 / SP-6) (Leptothrix discophora (strain SP-6)).